The primary structure comprises 491 residues: Protein nucleotidyltransferase YdiU (491 aa).

Glycine 94, glycine 96, arginine 97, lysine 117, aspartate 129, glycine 130, arginine 180, and arginine 187 together coordinate ATP. Residue aspartate 256 is the Proton acceptor of the active site. Mg(2+)-binding residues include asparagine 257 and aspartate 266. Residue aspartate 266 coordinates ATP.

Belongs to the SELO family. Requires Mg(2+) as cofactor. It depends on Mn(2+) as a cofactor.

It carries out the reaction L-seryl-[protein] + ATP = 3-O-(5'-adenylyl)-L-seryl-[protein] + diphosphate. The enzyme catalyses L-threonyl-[protein] + ATP = 3-O-(5'-adenylyl)-L-threonyl-[protein] + diphosphate. The catalysed reaction is L-tyrosyl-[protein] + ATP = O-(5'-adenylyl)-L-tyrosyl-[protein] + diphosphate. It catalyses the reaction L-histidyl-[protein] + UTP = N(tele)-(5'-uridylyl)-L-histidyl-[protein] + diphosphate. It carries out the reaction L-seryl-[protein] + UTP = O-(5'-uridylyl)-L-seryl-[protein] + diphosphate. The enzyme catalyses L-tyrosyl-[protein] + UTP = O-(5'-uridylyl)-L-tyrosyl-[protein] + diphosphate. Its function is as follows. Nucleotidyltransferase involved in the post-translational modification of proteins. It can catalyze the addition of adenosine monophosphate (AMP) or uridine monophosphate (UMP) to a protein, resulting in modifications known as AMPylation and UMPylation. The chain is Protein nucleotidyltransferase YdiU from Clostridium botulinum (strain Loch Maree / Type A3).